Here is a 279-residue protein sequence, read N- to C-terminus: Replication protein A 32 kDa subunit A (279 aa).

The disordered stretch occupies residues 1–39 (MMSFSQPDAFSPSQFTSSQNAAADSTTPSKSRGASSTMP). A DNA-binding region (OB) is located at residues 71–145 (VRLVGLVSGK…RATAFAIRPV (75 aa)). Residues 181–210 (GSSSSNGFSEMTTPTSVKSNPAPVLSVTNG) form a disordered region. Positions 190-199 (EMTTPTSVKS) are enriched in polar residues.

This sequence belongs to the replication factor A protein 2 family. As to quaternary structure, heterotrimer of RPA1, RPA2 and RPA3 (canonical replication protein A complex). Interacts with RPA1A, RPA1B and RPA3. In terms of processing, phosphorylated in a cell-cycle-dependent manner (from the S phase until mitosis). In response to DNA damage, recruited to DNA-repair nuclear foci, as a hypophosphorylated form. In terms of tissue distribution, expressed in root tips, roots, shoot apical meristem (SAM), young leaves, flag leaves and ears, and at lower levels in mature leaves.

The protein resides in the nucleus. Functionally, component of the replication protein A complex (RPA) required for DNA recombination, repair and replication. The activity of RPA is mediated by single-stranded DNA binding and protein interactions. The chain is Replication protein A 32 kDa subunit A (RPA2A) from Oryza sativa subsp. japonica (Rice).